The primary structure comprises 378 residues: Endopolygalacturonase I (378 aa).

A signal peptide spans 1-20; that stretch reads MHLNTTLLVSLALGAASVLA. Residues 21–39 constitute a propeptide that is removed on maturation; that stretch reads SPAPPAITAPPTAEEIAKR. A disulfide bridge links C43 with C61. T44 is a glycosylation site (O-linked (Man...) threonine). O-linked (Man...) serine glycosylation is found at S46, S48, S52, S53, S55, S57, and S62. O-linked (Man...) threonine glycosylation occurs at T63. Residue S73 is glycosylated (O-linked (Man...) serine). PbH1 repeat units follow at residues 174–204, 205–226, 227–247, 256–277, and 285–307; these read SDYL…DIGT, STYV…AVNS, GENI…SIGS, VKNV…RIKT, and VSDV…VVQQ. The active-site Proton donor is D219. The cysteines at positions 221 and 237 are disulfide-linked. H241 is an active-site residue. N258 carries an N-linked (GlcNAc...) asparagine glycan. Cystine bridges form between C345/C350 and C369/C378.

It belongs to the glycosyl hydrolase 28 family.

It localises to the secreted. It carries out the reaction (1,4-alpha-D-galacturonosyl)n+m + H2O = (1,4-alpha-D-galacturonosyl)n + (1,4-alpha-D-galacturonosyl)m.. Functionally, involved in maceration and soft-rotting of plant tissue. Hydrolyzes the 1,4-alpha glycosidic bonds of de-esterified pectate in the smooth region of the plant cell wall. This is Endopolygalacturonase I (pgaI) from Aspergillus aculeatus.